We begin with the raw amino-acid sequence, 184 residues long: Protein CPn_0803/CP_1068/CPj0803/CpB0832 (184 aa).

The protein belongs to the chlamydial CPn_0803/CT_584/TC_0873 family.

The chain is Protein CPn_0803/CP_1068/CPj0803/CpB0832 from Chlamydia pneumoniae (Chlamydophila pneumoniae).